Here is a 327-residue protein sequence, read N- to C-terminus: UDP-N-acetylenolpyruvoylglucosamine reductase (327 aa).

Residues 42-223 (RTGGLAELFY…RAAMDEVALH (182 aa)) form the FAD-binding PCMH-type domain. Arg-188 is an active-site residue. Residue Ser-237 is the Proton donor of the active site. Glu-307 is an active-site residue.

It belongs to the MurB family. Requires FAD as cofactor.

It is found in the cytoplasm. The catalysed reaction is UDP-N-acetyl-alpha-D-muramate + NADP(+) = UDP-N-acetyl-3-O-(1-carboxyvinyl)-alpha-D-glucosamine + NADPH + H(+). The protein operates within cell wall biogenesis; peptidoglycan biosynthesis. Cell wall formation. The protein is UDP-N-acetylenolpyruvoylglucosamine reductase of Bartonella tribocorum (strain CIP 105476 / IBS 506).